The primary structure comprises 338 residues: Fructose-1,6-bisphosphatase class 1 (338 aa).

Mg(2+) is bound by residues Glu-92, Asp-115, Leu-117, and Asp-118. Residues 118-121 (DGSS), Asn-211, Tyr-244, 262-264 (YLY), and Lys-274 each bind substrate. Position 280 (Glu-280) interacts with Mg(2+).

Belongs to the FBPase class 1 family. In terms of assembly, homotetramer. Mg(2+) is required as a cofactor.

It localises to the cytoplasm. It carries out the reaction beta-D-fructose 1,6-bisphosphate + H2O = beta-D-fructose 6-phosphate + phosphate. The protein operates within carbohydrate biosynthesis; gluconeogenesis. The sequence is that of Fructose-1,6-bisphosphatase class 1 from Vibrio parahaemolyticus serotype O3:K6 (strain RIMD 2210633).